A 419-amino-acid chain; its full sequence is S-adenosylmethionine synthase (419 aa).

An ATP-binding site is contributed by H15. Mg(2+) is bound at residue D17. K(+) is bound at residue E43. E56 and Q100 together coordinate L-methionine. The segment at 100 to 110 (QSPDIAQGVNE) is flexible loop. ATP contacts are provided by residues 171 to 173 (DGK), 248 to 249 (KF), D257, 263 to 264 (RK), A280, and K284. Residue D257 coordinates L-methionine. Position 288 (K288) interacts with L-methionine.

The protein belongs to the AdoMet synthase family. Homotetramer; dimer of dimers. It depends on Mg(2+) as a cofactor. Requires K(+) as cofactor.

The protein localises to the cytoplasm. It carries out the reaction L-methionine + ATP + H2O = S-adenosyl-L-methionine + phosphate + diphosphate. It functions in the pathway amino-acid biosynthesis; S-adenosyl-L-methionine biosynthesis; S-adenosyl-L-methionine from L-methionine: step 1/1. In terms of biological role, catalyzes the formation of S-adenosylmethionine (AdoMet) from methionine and ATP. The overall synthetic reaction is composed of two sequential steps, AdoMet formation and the subsequent tripolyphosphate hydrolysis which occurs prior to release of AdoMet from the enzyme. The sequence is that of S-adenosylmethionine synthase from Prochlorococcus marinus (strain MIT 9303).